We begin with the raw amino-acid sequence, 289 residues long: Serine/threonine-protein phosphatase Pgam5, mitochondrial (289 aa).

The protein belongs to the phosphoglycerate mutase family. BPG-dependent PGAM subfamily. In terms of assembly, interacts with Pk92B/ASK1.

It is found in the mitochondrion outer membrane. The enzyme catalyses O-phospho-L-seryl-[protein] + H2O = L-seryl-[protein] + phosphate. The catalysed reaction is O-phospho-L-threonyl-[protein] + H2O = L-threonyl-[protein] + phosphate. Displays phosphatase activity for serine/threonine residues, and dephosphorylates and activates Pk92B kinase. Has apparently no phosphoglycerate mutase activity. This is Serine/threonine-protein phosphatase Pgam5, mitochondrial from Drosophila yakuba (Fruit fly).